The following is a 159-amino-acid chain: 6,7-dimethyl-8-ribityllumazine synthase (159 aa).

5-amino-6-(D-ribitylamino)uracil contacts are provided by residues tryptophan 28, 59–61 (ALE), and 81–83 (CVI). Position 86–87 (86–87 (GT)) interacts with (2S)-2-hydroxy-3-oxobutyl phosphate. Histidine 89 (proton donor) is an active-site residue. Asparagine 114 contributes to the 5-amino-6-(D-ribitylamino)uracil binding site. Residue arginine 128 coordinates (2S)-2-hydroxy-3-oxobutyl phosphate.

This sequence belongs to the DMRL synthase family.

It carries out the reaction (2S)-2-hydroxy-3-oxobutyl phosphate + 5-amino-6-(D-ribitylamino)uracil = 6,7-dimethyl-8-(1-D-ribityl)lumazine + phosphate + 2 H2O + H(+). It participates in cofactor biosynthesis; riboflavin biosynthesis; riboflavin from 2-hydroxy-3-oxobutyl phosphate and 5-amino-6-(D-ribitylamino)uracil: step 1/2. Functionally, catalyzes the formation of 6,7-dimethyl-8-ribityllumazine by condensation of 5-amino-6-(D-ribitylamino)uracil with 3,4-dihydroxy-2-butanone 4-phosphate. This is the penultimate step in the biosynthesis of riboflavin. In Corynebacterium kroppenstedtii (strain DSM 44385 / JCM 11950 / CIP 105744 / CCUG 35717), this protein is 6,7-dimethyl-8-ribityllumazine synthase.